A 334-amino-acid chain; its full sequence is L-lactate dehydrogenase C chain (334 aa).

Residues 30–58, R100, and N139 each bind NAD(+); that span reads GQVGMACAVSVLLKELADELALVDILEDK. N139 and R170 together coordinate substrate. H194 (proton acceptor) is an active-site residue. T249 is a substrate binding site.

This sequence belongs to the LDH/MDH superfamily. LDH family. As to quaternary structure, homotetramer.

It is found in the cytoplasm. The enzyme catalyses (S)-lactate + NAD(+) = pyruvate + NADH + H(+). It functions in the pathway fermentation; pyruvate fermentation to lactate; (S)-lactate from pyruvate: step 1/1. The polypeptide is L-lactate dehydrogenase C chain (ldhc) (Xenopus laevis (African clawed frog)).